The primary structure comprises 226 residues: Low-molecular weight cobalt-containing nitrile hydratase subunit beta (226 aa).

Residues 1-22 (MDGIHDLGGRAGLGPIKPESDE) are disordered.

Belongs to the nitrile hydratase subunit beta family. Heterodimer of an alpha and a beta chain.

It carries out the reaction an aliphatic primary amide = an aliphatic nitrile + H2O. Functionally, NHase catalyzes the hydration of various nitrile compounds to the corresponding amides. This Rhodococcus rhodochrous protein is Low-molecular weight cobalt-containing nitrile hydratase subunit beta.